Consider the following 448-residue polypeptide: Protein arginine N-methyltransferase 2 (448 aa).

Interaction with ESR1 stretches follow at residues 1–289 (MEAP…SALK) and 145–287 (KESL…NLSA). One can recognise an SH3 domain in the interval 42-101 (LQPEEFVAIADYTATDETQLSFLRGEKILILRQTTADWWWGERAGCCGYIPANHLGKQLE). Arginine 73 and arginine 84 each carry asymmetric dimethylarginine. The interaction with RB1 stretch occupies residues 95–219 (HLGKQLEEYD…DVVLPEKVDV (125 aa)). Residues 111–414 (DEEYFDSYGT…CCVTKKSGME (304 aa)) form the SAM-dependent MTase PRMT-type domain. 5 residues coordinate S-adenosyl-L-methionine: histidine 124, arginine 133, glycine 157, glutamate 180, and glutamate 209. Active-site residues include glutamate 223 and glutamate 232.

Belongs to the class I-like SAM-binding methyltransferase superfamily. Protein arginine N-methyltransferase family. Self-associates. Interacts with HNRNPUL1. Interacts with NFKBIA. Interacts with NCOA6 coactivator. Interacts (via SH3 domain) with PRMT8. Interacts with AR. Interacts with ESR1, ESR2, PGR, PPARG, RARA, RXRA and THRB. Interacts with RB1 and E2F1. In terms of tissue distribution, expressed in liver, pancreas, lung, brain, skeletal muscle, heart, muscle and fat.

Its subcellular location is the cytoplasm. The protein localises to the nucleus. The enzyme catalyses L-arginyl-[protein] + 2 S-adenosyl-L-methionine = N(omega),N(omega)-dimethyl-L-arginyl-[protein] + 2 S-adenosyl-L-homocysteine + 2 H(+). Its function is as follows. Arginine methyltransferase that methylates the guanidino nitrogens of arginyl residues in proteins such as STAT3, FBL, histone H4. May inhibit NF-kappa-B transcription, and promote apoptosis. Represses E2F1 transcriptional activity (in a RB1-dependent manner). Has a negative regulation effect on G1 to S transition of mitotic cell cycle. Involved in growth regulation. Acts as a coactivator (with NCOA2) of the androgen receptor (AR)-mediated transactivation. Acts as a coactivator (with estrogen) of estrogen receptor (ER)-mediated transactivation. Enhances PGR, PPARG, RARA-mediated transactivation. This Mus musculus (Mouse) protein is Protein arginine N-methyltransferase 2 (Prmt2).